The primary structure comprises 349 residues: Soluble TNF receptor II (349 aa).

A signal peptide spans 1 to 19; that stretch reads MKSVLYSYILFLSCIIING. 2 TNFR-Cys repeats span residues 31–65 and 67–108; these read KCKD…NTQC and PCGS…NRIC. Intrachain disulfides connect Cys-32/Cys-43, Cys-44/Cys-57, Cys-47/Cys-65, Cys-68/Cys-83, Cys-86/Cys-100, and Cys-90/Cys-108. Asn-101, Asn-189, and Asn-248 each carry an N-linked (GlcNAc...) asparagine; by host glycan.

This sequence belongs to the orthopoxvirus OPG002 family.

In terms of biological role, inhibits host immune defense by binding to host TNF and various chemokines in the extracellular space. Binds host CC chemokines (beta chemokines) and CXC chemokines (alpha chemokines). In Camelus, this protein is Soluble TNF receptor II (OPG002).